The sequence spans 139 residues: Protein FAM216B (139 aa).

The protein belongs to the FAM216 family.

The sequence is that of Protein FAM216B (FAM216B) from Homo sapiens (Human).